Consider the following 147-residue polypeptide: Deoxyuridine 5'-triphosphate nucleotidohydrolase (147 aa).

Substrate contacts are provided by residues 63–65 (RSG), N76, and 80–82 (TID).

This sequence belongs to the dUTPase family. It depends on Mg(2+) as a cofactor.

It catalyses the reaction dUTP + H2O = dUMP + diphosphate + H(+). Its pathway is pyrimidine metabolism; dUMP biosynthesis; dUMP from dCTP (dUTP route): step 2/2. Functionally, this enzyme is involved in nucleotide metabolism: it produces dUMP, the immediate precursor of thymidine nucleotides and it decreases the intracellular concentration of dUTP so that uracil cannot be incorporated into DNA. This is Deoxyuridine 5'-triphosphate nucleotidohydrolase from Chlamydia caviae (strain ATCC VR-813 / DSM 19441 / 03DC25 / GPIC) (Chlamydophila caviae).